The following is a 242-amino-acid chain: MEGAGPVLSILGLLLVSAPFGVLGERPSADLGAHPERGSQVSPGTTEPRRQPPPKDQRERARAGSLSLGALYTAAVVAFVLFKCLQGPDEAAVLREEKNKKKSSQSEQQLVQLTQQLAQTEQHLNHLMTQLDPLFEQVTTLVGTQRELLDTKLKTIHHLLQDCQPGTGVEVPEPEASIPFTEDLGKEDQEAGNSQAWEEPITWSPETRNLAPSWEVEQGLRRRWHKTVTKGPAVNGEQPLKV.

The first 24 residues, 1 to 24 (MEGAGPVLSILGLLLVSAPFGVLG), serve as a signal peptide directing secretion. The interval 27-62 (PSADLGAHPERGSQVSPGTTEPRRQPPPKDQRERAR) is disordered. Residues 47 to 62 (EPRRQPPPKDQRERAR) are compositionally biased toward basic and acidic residues. A helical membrane pass occupies residues 65-85 (SLSLGALYTAAVVAFVLFKCL). A coiled-coil region spans residues 97-132 (EKNKKKSSQSEQQLVQLTQQLAQTEQHLNHLMTQLD). The interval 186–210 (KEDQEAGNSQAWEEPITWSPETRNL) is disordered.

It is found in the membrane. The protein is Coiled-coil domain-containing protein 107 (Ccdc107) of Mus musculus (Mouse).